The chain runs to 395 residues: Elongation factor Tu (395 aa).

The tr-type G domain maps to 10–204 (KPHCNIGTIG…TVDSYIPDPQ (195 aa)). The segment at 19–26 (GHVDHGKT) is G1. GTP is bound at residue 19–26 (GHVDHGKT). Residue T26 participates in Mg(2+) binding. The tract at residues 61-65 (GITIS) is G2. Residues 82–85 (DCPG) are G3. GTP is bound by residues 82–86 (DCPGH) and 137–140 (NKCD). Positions 137-140 (NKCD) are G4. Residues 173–175 (SAL) form a G5 region.

The protein belongs to the TRAFAC class translation factor GTPase superfamily. Classic translation factor GTPase family. EF-Tu/EF-1A subfamily. Monomer.

It localises to the cytoplasm. It catalyses the reaction GTP + H2O = GDP + phosphate + H(+). Its function is as follows. GTP hydrolase that promotes the GTP-dependent binding of aminoacyl-tRNA to the A-site of ribosomes during protein biosynthesis. In Agathobacter rectalis (strain ATCC 33656 / DSM 3377 / JCM 17463 / KCTC 5835 / VPI 0990) (Eubacterium rectale), this protein is Elongation factor Tu.